The chain runs to 208 residues: MIGKLKGIVDSYGEDFVILDVNGVGYVVHCSARTLQRLPKPGEATDLAIETHVREDMIRLYGFRVDAEREWFRLLQTVQGVGTRVALGVLSVLEPAQLATAIATGDKGAVARAPGVGPRLAARLVAELKDKAPAFAPIDPALIALTGAVEDRTAPQPVADAISALVNLGYAQIQASAAIAAALKGLGEEAGTVEAKTLIRLGLRELAR.

Positions 1-64 (MIGKLKGIVD…EDMIRLYGFR (64 aa)) are domain I. The domain II stretch occupies residues 65–143 (VDAEREWFRL…AFAPIDPALI (79 aa)). The flexible linker stretch occupies residues 144 to 152 (ALTGAVEDR). Residues 153-208 (TAPQPVADAISALVNLGYAQIQASAAIAAALKGLGEEAGTVEAKTLIRLGLRELAR) form a domain III region.

It belongs to the RuvA family. As to quaternary structure, homotetramer. Forms an RuvA(8)-RuvB(12)-Holliday junction (HJ) complex. HJ DNA is sandwiched between 2 RuvA tetramers; dsDNA enters through RuvA and exits via RuvB. An RuvB hexamer assembles on each DNA strand where it exits the tetramer. Each RuvB hexamer is contacted by two RuvA subunits (via domain III) on 2 adjacent RuvB subunits; this complex drives branch migration. In the full resolvosome a probable DNA-RuvA(4)-RuvB(12)-RuvC(2) complex forms which resolves the HJ.

The protein resides in the cytoplasm. The RuvA-RuvB-RuvC complex processes Holliday junction (HJ) DNA during genetic recombination and DNA repair, while the RuvA-RuvB complex plays an important role in the rescue of blocked DNA replication forks via replication fork reversal (RFR). RuvA specifically binds to HJ cruciform DNA, conferring on it an open structure. The RuvB hexamer acts as an ATP-dependent pump, pulling dsDNA into and through the RuvAB complex. HJ branch migration allows RuvC to scan DNA until it finds its consensus sequence, where it cleaves and resolves the cruciform DNA. This chain is Holliday junction branch migration complex subunit RuvA, found in Methylorubrum extorquens (strain CM4 / NCIMB 13688) (Methylobacterium extorquens).